A 278-amino-acid chain; its full sequence is MVQVGAHTSIAGGVDNAVEEQLEYDGTCGQIFTHSPQVWQDPNIGDEEATAFRDRSAEAGVGPWVIHSSYLVNLCTPKDDLREKSIDSMQKEVDAAATLHIPYVNVHLGAHTGAGVEQGLDNAASALEELDIPDGVTVLIESDAGSGTKLGSTFEELAGVLDRCDQPLDVCLDTAHMFAAGYDLSTPEGVAETFEAFDETVGLDHLEYIHLNDSKHDCGTNKDEHAHIGEGKIGEAGMRAFINHEAVADVPFVLETPTENGKSYPWNIKRVRELYEEA.

Residues His-67, His-107, Glu-141, Asp-173, His-176, His-210, Asp-223, His-225, and Glu-255 each coordinate Zn(2+).

The protein belongs to the AP endonuclease 2 family. Requires Zn(2+) as cofactor.

It carries out the reaction Endonucleolytic cleavage to 5'-phosphooligonucleotide end-products.. In terms of biological role, endonuclease IV plays a role in DNA repair. It cleaves phosphodiester bonds at apurinic or apyrimidinic (AP) sites, generating a 3'-hydroxyl group and a 5'-terminal sugar phosphate. In Natronomonas pharaonis (strain ATCC 35678 / DSM 2160 / CIP 103997 / JCM 8858 / NBRC 14720 / NCIMB 2260 / Gabara) (Halobacterium pharaonis), this protein is Probable endonuclease 4.